The chain runs to 183 residues: MKKKTSLSEEDQALFRQLMVGTRKIKQDTIVHRPLRKKITEVPTRRLIQEQADASHYFSDEFQPLLNTEGPVKYVREDVSHFELKKMRRGDYSPELFLDLHGLTQLQAKQELGALIAACRREHIFCACVMHGHGKHILKQQTPLWLAQHPHVMAFHQAPKEYGGDAALLVLIEVEEWQPPELP.

The Smr domain maps to 98-173 (LDLHGLTQLQ…GDAALLVLIE (76 aa)).

It belongs to the SmrB family. In terms of assembly, associates with collided ribosomes, but not with correctly translating polysomes.

Its function is as follows. Acts as a ribosome collision sensor. Detects stalled/collided disomes (pairs of ribosomes where the leading ribosome is stalled and a second ribosome has collided with it) and endonucleolytically cleaves mRNA at the 5' boundary of the stalled ribosome. Stalled/collided disomes form a new interface (primarily via the 30S subunits) that binds SmrB. Cleaved mRNA becomes available for tmRNA ligation, leading to ribosomal subunit dissociation and rescue of stalled ribosomes. This is Ribosome rescue factor SmrB from Salmonella agona (strain SL483).